A 315-amino-acid chain; its full sequence is Peroxidase 1 (315 aa).

A signal peptide spans 1 to 21; it reads MASSSYTSLLVLVALVTAASA. Glutamine 22 carries the pyrrolidone carboxylic acid modification. 4 disulfide bridges follow: cysteine 32–cysteine 107, cysteine 65–cysteine 70, cysteine 113–cysteine 310, and cysteine 193–cysteine 219. The active-site Proton acceptor is histidine 63. Positions 64, 67, 69, 71, and 73 each coordinate Ca(2+). Proline 155 is a substrate binding site. An N-linked (GlcNAc...) asparagine glycan is attached at asparagine 158. Position 186 (histidine 186) interacts with heme b. Threonine 187 contacts Ca(2+). The Ca(2+) site is built by aspartate 234, threonine 237, and aspartate 242. Asparagine 265 is a glycosylation site (N-linked (GlcNAc...) asparagine).

This sequence belongs to the peroxidase family. Classical plant (class III) peroxidase subfamily. Requires Ca(2+) as cofactor. It depends on heme b as a cofactor.

The protein resides in the secreted. It catalyses the reaction 2 a phenolic donor + H2O2 = 2 a phenolic radical donor + 2 H2O. Its function is as follows. Removal of H(2)O(2), oxidation of toxic reductants, biosynthesis and degradation of lignin, suberization, auxin catabolism, response to environmental stresses such as wounding, pathogen attack and oxidative stress. These functions might be dependent on each isozyme/isoform in each plant tissue. Functionally, involved in defense response to powdery meldew fungus. The polypeptide is Peroxidase 1 (Hordeum vulgare (Barley)).